Consider the following 401-residue polypeptide: SVP1-like protein 2 (401 aa).

2 WD repeats span residues 222-262 and 267-306; these read AHKN…LIHE and LDRALIYDMQWNGKGDKLAVVSDKFTLHIFQINEDLDKRH.

The protein belongs to the WD repeat PROPPIN family.

The protein localises to the vacuole membrane. It localises to the cytoplasmic vesicle membrane. In terms of biological role, involved in mitochondrial or peroxisomal functions and amino acid signaling pathways. This Eremothecium gossypii (strain ATCC 10895 / CBS 109.51 / FGSC 9923 / NRRL Y-1056) (Yeast) protein is SVP1-like protein 2 (HSV2).